A 449-amino-acid polypeptide reads, in one-letter code: Hyaluronidase-4 (449 aa).

The N-terminal stretch at 1–23 (MYHIWIKFLAAWIFLKRFNGVHV) is a signal peptide. Cystine bridges form between Cys-47/Cys-340 and Cys-211/Cys-227. N-linked (GlcNAc...) asparagine glycosylation is found at Asn-67, Asn-103, and Asn-111. Glu-135 functions as the Proton donor in the catalytic mechanism. The N-linked (GlcNAc...) asparagine glycan is linked to Asn-153. Residue Asn-357 is glycosylated (N-linked (GlcNAc...) asparagine). 3 disulfide bridges follow: Cys-365/Cys-376, Cys-370/Cys-427, and Cys-429/Cys-438. Residue Asn-401 is glycosylated (N-linked (GlcNAc...) asparagine). In terms of domain architecture, EGF-like spans 427–438 (CQCYQGWKGLYC).

Belongs to the glycosyl hydrolase 56 family. In terms of assembly, monomer. Expressed by the venom gland.

It is found in the secreted. It carries out the reaction Random hydrolysis of (1-&gt;4)-linkages between N-acetyl-beta-D-glucosamine and D-glucuronate residues in hyaluronate.. Snake venom endo-hyaluronidase that degrades hyaluronan to smaller oligosaccharide fragments. In venom, it is not toxic by itself, but increases the diffusion of other venom proteins by degrading the extracellular matrix. In addition, it displays antiedematogenic activity. This chain is Hyaluronidase-4, found in Cerastes cerastes (Horned desert viper).